The primary structure comprises 410 residues: Sensor-like histidine kinase SenX3 (410 aa).

Transmembrane regions (helical) follow at residues 6-26 and 46-66; these read ALLL…AVGM and ITVS…AAVV. A Histidine kinase domain is found at 164–380; the sequence is NVSHELKTPV…TFTLALPALI (217 aa). The residue at position 167 (His-167) is a Phosphohistidine; by autocatalysis. A disordered region spans residues 385-410; the sequence is DDERPEQAREPELRSNRSQREEELSR.

Post-translationally, autophosphorylated.

It is found in the cell membrane. It catalyses the reaction ATP + protein L-histidine = ADP + protein N-phospho-L-histidine.. Member of the two-component regulatory system SenX3/RegX3. Autophosphorylates, and then transfers the phosphate group to RegX3. The protein is Sensor-like histidine kinase SenX3 of Mycobacterium bovis (strain ATCC BAA-935 / AF2122/97).